A 580-amino-acid polypeptide reads, in one-letter code: mRNA-decapping enzyme 1A (580 aa).

Serine 62 is modified (phosphoserine). The span at 132–141 (RSQQAARDKQ) shows a compositional bias: basic and acidic residues. Disordered stretches follow at residues 132–154 (RSQQAARDKQSPNQANGCSDHRP), 172–209 (QMGDSNISSPGLQPSTQISNLGSTETLEETPSGLQDKS), and 245–276 (LPGDASQKEPSSFLPFSFEPSGGGPQSENMGI). 3 positions are modified to phosphoserine: serine 142, serine 179, and serine 180. The span at 173-196 (MGDSNISSPGLQPSTQISNLGSTE) shows a compositional bias: polar residues. A compositionally biased stretch (low complexity) spans 253-264 (EPSSFLPFSFEP). Residues serine 319 and serine 334 each carry the phosphoserine modification. Positions 343–359 (QAVKTTPRQRSPLSSQP) are enriched in polar residues. The tract at residues 343–371 (QAVKTTPRQRSPLSSQPVPELSQASLAAS) is disordered. Threonine 348 carries the phosphothreonine modification. The residue at position 353 (serine 353) is a Phosphoserine. At arginine 376 the chain carries Asymmetric dimethylarginine. Threonine 401 is subject to Phosphothreonine. Serine 422, serine 520, serine 521, and serine 523 each carry phosphoserine. A disordered region spans residues 510–533 (TRSSDLERKASSPSPLTVGTSENQ). Polar residues predominate over residues 520–531 (SSPSPLTVGTSE). Phosphothreonine occurs at positions 526 and 529.

Belongs to the DCP1 family. Forms a complex with EDC3, DCP2, DDX6 and EDC4/HEDLS, within this complex directly interacts with EDC3. Part of a cytoplasmic complex containing proteins involved in mRNA decay, including XRN1 and LSM1. Interacts with DCP1B. Interacts with DCP2. Interacts with DDX17 in an RNA-independent manner. Interacts with PNRC2. Interacts with SMAD4. Interacts with UPF1. Interacts with ZC3HAV1. Interacts with ZFP36L1. Interacts with NBDY. Interacts with DHX34; the interaction is RNA-independent. (Microbial infection) Cleaved by porcine reproductive and respiratory syndrome virus serine protease nsp4 after Glu-238. The cleavage inhibits DCP1A function.

It is found in the cytoplasm. The protein resides in the P-body. It localises to the nucleus. The enzyme catalyses a 5'-end (N(7)-methyl 5'-triphosphoguanosine)-ribonucleoside in mRNA + H2O = N(7)-methyl-GDP + a 5'-end phospho-ribonucleoside in mRNA + 2 H(+). Necessary for the degradation of mRNAs, both in normal mRNA turnover and in nonsense-mediated mRNA decay. Removes the 7-methyl guanine cap structure from mRNA molecules, yielding a 5'-phosphorylated mRNA fragment and 7m-GDP. Contributes to the transactivation of target genes after stimulation by TGFB1. Essential for embryonic development. The protein is mRNA-decapping enzyme 1A (DCP1A) of Sus scrofa (Pig).